The sequence spans 97 residues: Protein RnfH (97 aa).

It belongs to the UPF0125 (RnfH) family.

In Proteus mirabilis (strain HI4320), this protein is Protein RnfH.